The sequence spans 545 residues: MLPINNNFSLPQNSFYNTISGTYADYFSAWDKWEKQALPGEERDEAVSRLKECLINNSDELRLDRLNLSSLPDNLPAQITLLNVSYNQLTNLPELPVTLKKLYSASNKLSELPVLPPALESLQVQHNELENLPALPDSLLTMNISYNEIVSLPSLPLALKNLRATRNFLTELPAFSEGNNPVVREYFFDRNQISHIPESILNLRNECSIHISDNPLSSHALQALQRLTSSPDYHGPRIYFSMSDGQQNTLHRPLADAVTAWFPENKQSDVSQIWHAFEHEEHANTFSAFLDRLSDTVSARNTSGFREQVAAWLEKLSASAELRQQSFAVAADATESCEDRVALTWNNLRKTLLVHQASEGLFDNDTGALLSLGREMFRLEILEDIARDKVRTLHFVDEIEVYLAFQTMLAEKLQLSTAVKEMRFYGVSGVTANDLRTAEAMVRSREENEFTDWFSLWGPWHAVLKRTEADRWALAEEQKYEMLENEYPQRVADRLKASGLSGDADAEREAGAQVMRETEQQIYRQLTDEVLALRLSENGSQLHHS.

Residues 1-242 (MLPINNNFSL…YHGPRIYFSM (242 aa)) form an interaction with target proteins region. LRR repeat units lie at residues 57 to 77 (NSDE…NLPA), 78 to 99 (QITL…PVTL), 100 to 117 (KKLY…VLPP), 118 to 139 (ALES…PDSL), 140 to 157 (LTMN…SLPL), 158 to 179 (ALKN…SEGN), 182 to 203 (VVRE…ILNL), and 205 to 228 (NECS…QRLT). A linker region spans residues 243–250 (SDGQQNTL). Residues 251 to 545 (HRPLADAVTA…SENGSQLHHS (295 aa)) are E3 ubiquitin-protein ligase catalytic domain. Residues 253–545 (PLADAVTAWF…SENGSQLHHS (293 aa)) enclose the NEL domain. Cys337 (glycyl thioester intermediate) is an active-site residue.

It belongs to the LRR-containing bacterial E3 ligase family. Also interacts with human and mouse U2AF1 (U2AF35). Post-translationally, ubiquitinated in the presence of host E1 ubiquitin-activating enzyme, E2 ubiquitin-conjugating enzyme and ubiquitin.

It is found in the secreted. The protein resides in the host cytoplasm. The protein localises to the host nucleus. The catalysed reaction is S-ubiquitinyl-[E2 ubiquitin-conjugating enzyme]-L-cysteine + [acceptor protein]-L-lysine = [E2 ubiquitin-conjugating enzyme]-L-cysteine + N(6)-ubiquitinyl-[acceptor protein]-L-lysine.. Its activity is regulated as follows. Exists in an autoinhibited state in the absence of substrate protein, due to interactions of the leucine-rich repeats with NEL domain. Is activated upon binding to a substrate protein. Functionally, effector E3 ubiquitin ligase that interferes with host's ubiquitination pathway and modulates the acute inflammatory responses, thus facilitating bacterial colonization within the host cell. Interacts with IKBKG (NEMO) and TNIP1 (ABIN-1), a ubiquitin-binding adapter protein, which results in TNIP1-dependent 'Lys-27'-linked polyubiquitination of IKBKG. Consequently, polyubiquitinated IKBKG undergoes proteasome-dependent degradation, which perturbs NF-kappa-B activation during bacterial infection. Mediates polyubiquitination of host U2AF1, leading to its proteasomal degradation. Catalyzes 'Lys-48'-linked polyubiquitination and subsequent degradation of a subset of host guanylate-binding proteins (GBP1, GBP2, GBP4 and GBP6), thereby suppressing host cell defense. In contrast, host GBP3 and GBP7 are not ubiquitinated by IpaH9.8. Uses UBE2D2 (UBCH5B) as an E2 ubiquitin-conjugating enzyme. The protein is E3 ubiquitin-protein ligase ipaH9.8 (ipaH9.8) of Shigella boydii serotype 4 (strain Sb227).